A 440-amino-acid polypeptide reads, in one-letter code: D-serine dehydratase (440 aa).

Position 116 is an N6-(pyridoxal phosphate)lysine (Lys-116).

Belongs to the serine/threonine dehydratase family. DsdA subfamily. As to quaternary structure, monomer. Pyridoxal 5'-phosphate serves as cofactor.

It carries out the reaction D-serine = pyruvate + NH4(+). The chain is D-serine dehydratase from Salmonella enteritidis PT4 (strain P125109).